The chain runs to 844 residues: E3 ubiquitin-protein ligase BRE1-like 2 (844 aa).

Coiled-coil stretches lie at residues 1–38 (MDAAALQYENQKLVQQLEAQKSKMRALEGKFKELRDEQ) and 160–240 (EDVI…QLQT). The interval 244 to 269 (SLMNTSAPNGVNGSVSTDKSSDKGMG) is disordered. Residues 245-261 (LMNTSAPNGVNGSVSTD) are compositionally biased toward polar residues. Coiled-coil stretches lie at residues 290-604 (ELHE…SEIE) and 640-670 (KMKQAYGSLLAEKNMLQKQLQHVNSSLESSK). An RING-type zinc finger spans residues 792-831 (CGVCFDRPKEVVITKCFHLFCSPCIQRNLEIRHRKCPGCG).

It belongs to the BRE1 family.

The protein localises to the nucleus. It carries out the reaction S-ubiquitinyl-[E2 ubiquitin-conjugating enzyme]-L-cysteine + [acceptor protein]-L-lysine = [E2 ubiquitin-conjugating enzyme]-L-cysteine + N(6)-ubiquitinyl-[acceptor protein]-L-lysine.. Its pathway is protein modification; protein ubiquitination. Its function is as follows. E3 ubiquitin-protein ligase that monoubiquitinates H2B to form H2BK143ub1. H2BK143ub1 gives a specific tag for epigenetic transcriptional activation and is also prerequisite for H3K4me and maybe H3K79me. It thereby plays a central role in histone code and gene regulation. Forms a ubiquitin ligase complex in cooperation with the E2 enzyme UBC2/RAD6. In Oryza sativa subsp. indica (Rice), this protein is E3 ubiquitin-protein ligase BRE1-like 2 (BRE1B).